Here is a 315-residue protein sequence, read N- to C-terminus: Methionyl-tRNA formyltransferase (315 aa).

Ser-113 to Pro-116 contacts (6S)-5,6,7,8-tetrahydrofolate.

Belongs to the Fmt family.

It catalyses the reaction L-methionyl-tRNA(fMet) + (6R)-10-formyltetrahydrofolate = N-formyl-L-methionyl-tRNA(fMet) + (6S)-5,6,7,8-tetrahydrofolate + H(+). In terms of biological role, attaches a formyl group to the free amino group of methionyl-tRNA(fMet). The formyl group appears to play a dual role in the initiator identity of N-formylmethionyl-tRNA by promoting its recognition by IF2 and preventing the misappropriation of this tRNA by the elongation apparatus. In Escherichia coli (strain SMS-3-5 / SECEC), this protein is Methionyl-tRNA formyltransferase.